A 163-amino-acid polypeptide reads, in one-letter code: Epididymal-specific lipocalin-6 (163 aa).

Residues 1 to 20 (MGGLLLAAFLALVSVPRAQA) form the signal peptide.

Belongs to the calycin superfamily. Lipocalin family. In terms of tissue distribution, predominantly expressed in epididymis.

Its subcellular location is the secreted. Functionally, may play a role in male fertility. The chain is Epididymal-specific lipocalin-6 (LCN6) from Homo sapiens (Human).